A 109-amino-acid chain; its full sequence is Small ribosomal subunit protein bS20 (109 aa).

This sequence belongs to the bacterial ribosomal protein bS20 family.

Binds directly to 16S ribosomal RNA. The polypeptide is Small ribosomal subunit protein bS20 (Synechococcus sp. (strain JA-2-3B'a(2-13)) (Cyanobacteria bacterium Yellowstone B-Prime)).